The primary structure comprises 124 residues: Glycine cleavage system H protein (124 aa).

Residues 19–101 (TGTVGITDYA…AGKGWFLQIK (83 aa)) form the Lipoyl-binding domain. N6-lipoyllysine is present on K60.

The protein belongs to the GcvH family. The glycine cleavage system is composed of four proteins: P, T, L and H. (R)-lipoate is required as a cofactor.

The glycine cleavage system catalyzes the degradation of glycine. The H protein shuttles the methylamine group of glycine from the P protein to the T protein. The protein is Glycine cleavage system H protein of Beijerinckia indica subsp. indica (strain ATCC 9039 / DSM 1715 / NCIMB 8712).